The following is a 310-amino-acid chain: Homoserine kinase (310 aa).

91–101 contributes to the ATP binding site; that stretch reads PIGSGLGSSAC.

This sequence belongs to the GHMP kinase family. Homoserine kinase subfamily.

It localises to the cytoplasm. The catalysed reaction is L-homoserine + ATP = O-phospho-L-homoserine + ADP + H(+). The protein operates within amino-acid biosynthesis; L-threonine biosynthesis; L-threonine from L-aspartate: step 4/5. Functionally, catalyzes the ATP-dependent phosphorylation of L-homoserine to L-homoserine phosphate. This Escherichia coli O6:H1 (strain CFT073 / ATCC 700928 / UPEC) protein is Homoserine kinase.